A 120-amino-acid chain; its full sequence is uncharacterized protein (120 aa).

The Nudix hydrolase domain maps to 29-120 (QRQAAVLVPI…QVTPVVGIIP (92 aa)). A Nudix box motif is present at residues 67-89 (GAVDNSDATLIAAALREAQEEVA). Mg(2+)-binding residues include Glu83 and Glu87.

Belongs to the Nudix hydrolase family. PCD1 subfamily. Mn(2+) is required as a cofactor. It depends on Mg(2+) as a cofactor.

Probably mediates the hydrolysis of some nucleoside diphosphate derivatives. This is an uncharacterized protein from Klebsiella aerogenes (Enterobacter aerogenes).